The sequence spans 115 residues: Large ribosomal subunit protein bL20 (115 aa).

It belongs to the bacterial ribosomal protein bL20 family.

Its function is as follows. Binds directly to 23S ribosomal RNA and is necessary for the in vitro assembly process of the 50S ribosomal subunit. It is not involved in the protein synthesizing functions of that subunit. The sequence is that of Large ribosomal subunit protein bL20 from Chlorobium phaeobacteroides (strain BS1).